Consider the following 368-residue polypeptide: Homoserine O-acetyltransferase (368 aa).

The AB hydrolase-1 domain occupies 43–354 (NVVVVCHALT…DYGHDAFLVE (312 aa)). Ser148 (nucleophile) is an active-site residue. Position 220 (Arg220) interacts with substrate. Catalysis depends on residues Asp314 and His348. Residue Asp349 participates in substrate binding.

Belongs to the AB hydrolase superfamily. MetX family. In terms of assembly, homodimer.

The protein resides in the cytoplasm. The enzyme catalyses L-homoserine + acetyl-CoA = O-acetyl-L-homoserine + CoA. The protein operates within amino-acid biosynthesis; L-methionine biosynthesis via de novo pathway; O-acetyl-L-homoserine from L-homoserine: step 1/1. Transfers an acetyl group from acetyl-CoA to L-homoserine, forming acetyl-L-homoserine. The chain is Homoserine O-acetyltransferase from Sulfurimonas autotrophica (strain ATCC BAA-671 / DSM 16294 / JCM 11897 / OK10).